We begin with the raw amino-acid sequence, 200 residues long: High mobility group protein 1 homolog (200 aa).

DNA-binding regions (HMG box) lie at residues 11-81 (PRGR…QSYK) and 100-168 (PKRN…AEYK). Residues 64 to 86 (EKSMRDKVRYDREMQSYKPPKGE) are compositionally biased toward basic and acidic residues. Disordered regions lie at residues 64-103 (EKSMRDKVRYDREMQSYKPPKGEKNKRRRRRKDPDAPKRN) and 169-200 (AKAKPMKRQVKESSSSSSSDSSSDDSSSDDSD). The span at 190 to 200 (SSDDSSSDDSD) shows a compositional bias: acidic residues.

This sequence belongs to the HMGB family.

It localises to the nucleus. The protein resides in the chromosome. Functionally, binds preferentially single-stranded DNA and unwinds double-stranded DNA. The chain is High mobility group protein 1 homolog (HMG1) from Strongylocentrotus purpuratus (Purple sea urchin).